The following is a 350-amino-acid chain: 2-oxoglutarate-dependent ethylene/succinate-forming enzyme (350 aa).

Residues 166–286 (GWHHMRVLRF…RFACAYFHEP (121 aa)) form the Fe2OG dioxygenase domain. 2 residues coordinate Fe cation: H189 and H268.

It belongs to the iron/ascorbate-dependent oxidoreductase family. Monomer. The cofactor is Fe(2+).

The catalysed reaction is 2-oxoglutarate + O2 + 2 H(+) = ethene + 3 CO2 + H2O. It carries out the reaction L-arginine + 2-oxoglutarate + O2 = guanidine + L-glutamate 5-semialdehyde + succinate + CO2. The protein operates within alkene biosynthesis; ethylene biosynthesis via 2-oxoglutarate. Its activity is regulated as follows. Activated by catalase. Inhibited by chelating reagents such as EDTA and Tiron (4,5-dihydroxy-1,3-benzene disulphonic acid), and by DTNB (5,5'-dithio-bis-2-nitrobenzoate) and hydrogen peroxide. Its function is as follows. Simultaneously catalyzes two reactions, namely formation of ethylene and of succinate from 2-oxoglutarate, with a molar ratio of 2:1. In Pseudomonas savastanoi pv. phaseolicola (Pseudomonas syringae pv. phaseolicola), this protein is 2-oxoglutarate-dependent ethylene/succinate-forming enzyme (efe).